The primary structure comprises 514 residues: Tumor necrosis factor receptor superfamily member EDAR (514 aa).

The N-terminal stretch at 1-27 (MKMWKRRGQKKSMFLSSLLVCCMFASA) is a signal peptide. The Extracellular segment spans residues 28-183 (EYSSCGEYEF…SPGQGHLATA (156 aa)). TNFR-Cys repeat units lie at residues 31–72 (SCGE…GFAC), 74–114 (PCPQ…DAEC), and 116–149 (PCLPGYYMLENRARNLYAMVCHSCQNAPLNTKEC). Cystine bridges form between Cys-32–Cys-45, Cys-48–Cys-61, Cys-51–Cys-72, Cys-75–Cys-88, Cys-94–Cys-114, Cys-117–Cys-136, and Cys-139–Cys-149. Asn-39 and Asn-58 each carry an N-linked (GlcNAc...) asparagine glycan. A helical membrane pass occupies residues 184 to 204 (LIIAMSTIFIMAIAIVLIIMF). Residues 205-514 (YILKAKPNGQ…TSPSPRCASV (310 aa)) lie on the Cytoplasmic side of the membrane. The interval 254–294 (LKASPQKTVKSENDASSENEQLLSRSIDSDEEPTSDKLRSS) is disordered. A compositionally biased stretch (polar residues) spans 267–279 (DASSENEQLLSRS). The Death domain maps to 403–476 (RMLSSSYSSD…DAVESLCADV (74 aa)).

The protein localises to the membrane. In terms of biological role, receptor for EDA. May mediate the activation of NF-kappa-B and JNK. This Oryzias latipes (Japanese rice fish) protein is Tumor necrosis factor receptor superfamily member EDAR (edar).